Consider the following 474-residue polypeptide: Proline--tRNA ligase (474 aa).

Belongs to the class-II aminoacyl-tRNA synthetase family. ProS type 3 subfamily. As to quaternary structure, homodimer.

The protein localises to the cytoplasm. The enzyme catalyses tRNA(Pro) + L-proline + ATP = L-prolyl-tRNA(Pro) + AMP + diphosphate. Its function is as follows. Catalyzes the attachment of proline to tRNA(Pro) in a two-step reaction: proline is first activated by ATP to form Pro-AMP and then transferred to the acceptor end of tRNA(Pro). The polypeptide is Proline--tRNA ligase (Mycoplasma capricolum subsp. capricolum (strain California kid / ATCC 27343 / NCTC 10154)).